A 78-amino-acid polypeptide reads, in one-letter code: Large ribosomal subunit protein bL28 (78 aa).

It belongs to the bacterial ribosomal protein bL28 family.

In Legionella pneumophila (strain Paris), this protein is Large ribosomal subunit protein bL28.